We begin with the raw amino-acid sequence, 160 residues long: Cytochrome b6-f complex subunit 4 (160 aa).

A run of 3 helical transmembrane segments spans residues 36 to 56 (LLYIFPIVILGTIACIAGLAV), 95 to 115 (LLGVLLMASVPAGLLTVPFLE), and 131 to 151 (TVFLIGTVVAIWLGIGAALPI).

This sequence belongs to the cytochrome b family. PetD subfamily. In terms of assembly, the 4 large subunits of the cytochrome b6-f complex are cytochrome b6, subunit IV (17 kDa polypeptide, petD), cytochrome f and the Rieske protein, while the 4 small subunits are petG, petL, petM and petN. The complex functions as a dimer.

The protein localises to the plastid. It is found in the chloroplast thylakoid membrane. Functionally, component of the cytochrome b6-f complex, which mediates electron transfer between photosystem II (PSII) and photosystem I (PSI), cyclic electron flow around PSI, and state transitions. The protein is Cytochrome b6-f complex subunit 4 of Psilotum nudum (Whisk fern).